A 153-amino-acid polypeptide reads, in one-letter code: Glucose-6-phosphate 1-dehydrogenase (153 aa).

Positions 21 and 120 each coordinate NADP(+). Lys-120 lines the D-glucose 6-phosphate pocket.

The protein belongs to the glucose-6-phosphate dehydrogenase family.

It is found in the cytoplasm. Its subcellular location is the cytosol. It catalyses the reaction D-glucose 6-phosphate + NADP(+) = 6-phospho-D-glucono-1,5-lactone + NADPH + H(+). The protein operates within carbohydrate degradation; pentose phosphate pathway; D-ribulose 5-phosphate from D-glucose 6-phosphate (oxidative stage): step 1/3. Its function is as follows. Cytosolic glucose-6-phosphate dehydrogenase that catalyzes the first and rate-limiting step of the oxidative branch within the pentose phosphate pathway/shunt, an alternative route to glycolysis for the dissimilation of carbohydrates and a major source of reducing power and metabolic intermediates for fatty acid and nucleic acid biosynthetic processes. The chain is Glucose-6-phosphate 1-dehydrogenase (ZW) from Culex pipiens (House mosquito).